The following is a 96-amino-acid chain: Large ribosomal subunit protein bL21 (96 aa).

This sequence belongs to the bacterial ribosomal protein bL21 family. In terms of assembly, part of the 50S ribosomal subunit. Contacts protein L20.

In terms of biological role, this protein binds to 23S rRNA in the presence of protein L20. The chain is Large ribosomal subunit protein bL21 from Hydrogenobaculum sp. (strain Y04AAS1).